The following is an 874-amino-acid chain: Leucine--tRNA ligase (874 aa).

Residues 47 to 57 (PYPSGKLHMGH) carry the 'HIGH' region motif. The 'KMSKS' region signature appears at 636-640 (KMSKS). Position 639 (Lys639) interacts with ATP.

The protein belongs to the class-I aminoacyl-tRNA synthetase family.

It localises to the cytoplasm. The catalysed reaction is tRNA(Leu) + L-leucine + ATP = L-leucyl-tRNA(Leu) + AMP + diphosphate. The polypeptide is Leucine--tRNA ligase (Acinetobacter baumannii (strain AB307-0294)).